Reading from the N-terminus, the 1200-residue chain is ATP-dependent helicase/deoxyribonuclease subunit B (1200 aa).

This sequence belongs to the helicase family. AddB/RexB type 2 subfamily. Heterodimer of AddA and RexB. Mg(2+) serves as cofactor.

Functionally, the heterodimer acts as both an ATP-dependent DNA helicase and an ATP-dependent, dual-direction single-stranded exonuclease. Recognizes the chi site generating a DNA molecule suitable for the initiation of homologous recombination. This subunit has 5' -&gt; 3' nuclease activity but not helicase activity. The protein is ATP-dependent helicase/deoxyribonuclease subunit B of Lactiplantibacillus plantarum (strain ATCC BAA-793 / NCIMB 8826 / WCFS1) (Lactobacillus plantarum).